We begin with the raw amino-acid sequence, 862 residues long: Phosphofurin acidic cluster sorting protein 2 (862 aa).

Disordered regions lie at residues 151 to 215, 263 to 436, and 658 to 713; these read HEDS…TTSM, LDVE…TRSQ, and SSAT…SQGV. A compositionally biased stretch (low complexity) spans 263–272; it reads LDVENPSDSG. Residues 313-328 are compositionally biased toward basic and acidic residues; it reads SHREPPSPADVPEKTR. The span at 332-344 shows a compositional bias: polar residues; sequence GKQQLSDSVSDTV. Phosphoserine is present on residues serine 361, serine 387, serine 424, serine 662, and serine 665. Low complexity-rich tracts occupy residues 658-693 and 700-710; these read SSAT…KEAS and PSVSGGLSSPS.

The protein belongs to the PACS family. Interacts with BID and PKD2. Interacts with SIRT1. Interacts with HDAC1. Interacts with TRPV1. Interacts with WDR37.

The protein localises to the endoplasmic reticulum. The protein resides in the mitochondrion. Multifunctional sorting protein that controls the endoplasmic reticulum (ER)-mitochondria communication, including the apposition of mitochondria with the ER and ER homeostasis. In addition, in response to apoptotic inducer, translocates BIB to mitochondria, which initiates a sequence of events including the formation of mitochondrial truncated BID, the release of cytochrome c, the activation of caspase-3 thereby causing cell death. May also involved in ion channel trafficking, directing acidic cluster-containing ion channels to distinct subcellular compartments. This Mus musculus (Mouse) protein is Phosphofurin acidic cluster sorting protein 2 (Pacs2).